The primary structure comprises 252 residues: Fatty acid elongase 4 (252 aa).

A helical membrane pass occupies residues 25–45; the sequence is LVSWHALVLGHLLYLFVVFVM. The N-linked (GlcNAc...) asparagine glycan is linked to Asn-56. The helical transmembrane segment at 60-80 threads the bilayer; that stretch reads VLVVYNVLQICLSAAMAINLS. Asn-89 carries an N-linked (GlcNAc...) asparagine glycan. Helical transmembrane passes span 100–120, 127–147, 150–170, 187–207, and 214–234; these read FWMF…VFIL, QLSF…GILL, GLAN…HFLM, FLLT…AILV, and FTLG…VLFL. The HxxHH motif signature appears at 132–136; that stretch reads HVYHH. His-135 functions as the Nucleophile in the catalytic mechanism.

It belongs to the ELO family.

It is found in the membrane. It catalyses the reaction (5Z,8Z,11Z,14Z)-eicosatetraenoyl-CoA + malonyl-CoA + H(+) = (7Z,10Z,13Z,16Z)-3-oxodocosatetraenoyl-CoA + CO2 + CoA. Its pathway is lipid metabolism; fatty acid biosynthesis. In terms of biological role, involved in the synthesis of fatty acids. Elongates arachidonate and other C20 polyunsaturated fatty acids (PUFAs) with a preference for n-6 PUFAs. Not involved in fatty acid synthesis up to C18. This chain is Fatty acid elongase 4, found in Trypanosoma brucei brucei (strain 927/4 GUTat10.1).